The chain runs to 269 residues: MNFIVYPALDIRNGAVVRLQQGDYARQTRYDDQVLPRAQAFADSGATWMHLVDLDAAKAGGYTLAPLLRQITRATGLQVQTGGGVRSRDDVARILDAGAARVVIGSLAVRQMTCVIEWLQAFGPERITVALDTRQDAGGVWRLPVHGWTEVAEATLEALAQQYAAAGLRHLLCTDIARDGMLSGPNMDVYAYLRALVPAVQIQVSGGARDVADVVAAKMAGCAGIVLGKALLEGRLALKEAVQHGSVADPGDPLPCGELTEPVCRYRSV.

The active-site Proton acceptor is the aspartate 10. Aspartate 132 (proton donor) is an active-site residue.

It belongs to the HisA/HisF family.

Its subcellular location is the cytoplasm. The catalysed reaction is 1-(5-phospho-beta-D-ribosyl)-5-[(5-phospho-beta-D-ribosylamino)methylideneamino]imidazole-4-carboxamide = 5-[(5-phospho-1-deoxy-D-ribulos-1-ylimino)methylamino]-1-(5-phospho-beta-D-ribosyl)imidazole-4-carboxamide. The protein operates within amino-acid biosynthesis; L-histidine biosynthesis; L-histidine from 5-phospho-alpha-D-ribose 1-diphosphate: step 4/9. The polypeptide is 1-(5-phosphoribosyl)-5-[(5-phosphoribosylamino)methylideneamino] imidazole-4-carboxamide isomerase (Xylella fastidiosa (strain Temecula1 / ATCC 700964)).